Consider the following 204-residue polypeptide: dITP/XTP pyrophosphatase (204 aa).

Substrate is bound at residue 14–19 (THNKGK). Residues E46 and D75 each contribute to the Mg(2+) site. D75 (proton acceptor) is an active-site residue. Substrate is bound by residues S76, 161–164 (FGYD), K184, and 189–190 (HR).

This sequence belongs to the HAM1 NTPase family. Homodimer. Requires Mg(2+) as cofactor.

It catalyses the reaction XTP + H2O = XMP + diphosphate + H(+). The catalysed reaction is dITP + H2O = dIMP + diphosphate + H(+). The enzyme catalyses ITP + H2O = IMP + diphosphate + H(+). Its function is as follows. Pyrophosphatase that catalyzes the hydrolysis of nucleoside triphosphates to their monophosphate derivatives, with a high preference for the non-canonical purine nucleotides XTP (xanthosine triphosphate), dITP (deoxyinosine triphosphate) and ITP. Seems to function as a house-cleaning enzyme that removes non-canonical purine nucleotides from the nucleotide pool, thus preventing their incorporation into DNA/RNA and avoiding chromosomal lesions. The polypeptide is dITP/XTP pyrophosphatase (Ruegeria pomeroyi (strain ATCC 700808 / DSM 15171 / DSS-3) (Silicibacter pomeroyi)).